A 418-amino-acid polypeptide reads, in one-letter code: MNLKEMGKNAKQAATILAQLSQQQKNTALQIIAEQLELQSNKILVENAKDIQLAKENGLSDAIIDRLLLTKERINSIANDVRHIISLPDPIGQIIDGGILESGTKLERVRVPLGVIGVIYEARPNVTVDVATLCLKTGNAVILRGGKETSYSNKILVTVIQDALEQTGLPKNAVQAITDPDRNFVLELLKLDKYVDMIIPRGGAGLHEFCKQNSTIPVIIGGVGVCHVFVEESAEQDKALAVIDNAKTQRPSTCNTLETLLVQESIATEFLPKLVAHLKHKNVKYHADPTALSILEKQNAEVSIVQEQQLRQEWGSLDLNVVIVKDIQQAIAHITEYGTQHSEAILTSSPRLAHQFVSLVDAAAVYVNASTRFTDGGQFGLGAEVAVSTQKLHARGPMGLEALTTYKWVCSGDYTVRQ.

The protein belongs to the gamma-glutamyl phosphate reductase family.

It localises to the cytoplasm. It catalyses the reaction L-glutamate 5-semialdehyde + phosphate + NADP(+) = L-glutamyl 5-phosphate + NADPH + H(+). It functions in the pathway amino-acid biosynthesis; L-proline biosynthesis; L-glutamate 5-semialdehyde from L-glutamate: step 2/2. Its function is as follows. Catalyzes the NADPH-dependent reduction of L-glutamate 5-phosphate into L-glutamate 5-semialdehyde and phosphate. The product spontaneously undergoes cyclization to form 1-pyrroline-5-carboxylate. This is Gamma-glutamyl phosphate reductase from Histophilus somni (strain 129Pt) (Haemophilus somnus).